The primary structure comprises 362 residues: MALSTSAIGFEGYENRLEISFFEAGIFSDPEGRGLRALSKEQLDKVLKPAECTIVSSLSNNEVDSYVLSESSLFVYPYKIIIKTCGTTKLLLSIPPILELADGLSLKVKSVKYTRGSFNFPEVQPYPHRNFSEEVAILDSYFGKLSTGSKAYVMGGAGKQQQWHVYSASAESAENTFPIYTLEMCMTGLDKKSASVFFKTQSSSAAVMTDASGIRKILPGSEICDFDFEPCGYSMNAVEGGAISPIHVTPEDGFSYASFEAMGYDFKDVNLDALIQRVLSCFQPAEFSVALHCDSIGEKLDSVFKLDVKGYACGERSYEGLNKGGSIMYCGFTSTGSCGSPRSTLLCCWSENEDEEGEKKHF.

Active-site residues include Glu11 and Glu14. The active-site Schiff-base intermediate with substrate; via pyruvic acid is the Ser71. At Ser71 the chain carries Pyruvic acid (Ser); by autocatalysis. The active-site Proton donor; for catalytic activity is Cys85. Residues Ser234 and His247 each act as proton acceptor; for processing activity in the active site.

The protein belongs to the eukaryotic AdoMetDC family. It depends on pyruvate as a cofactor. Is synthesized initially as an inactive proenzyme. Formation of the active enzyme involves a self-maturation process in which the active site pyruvoyl group is generated from an internal serine residue via an autocatalytic post-translational modification. Two non-identical subunits are generated from the proenzyme in this reaction, and the pyruvate is formed at the N-terminus of the alpha chain, which is derived from the carboxyl end of the proenzyme. The post-translation cleavage follows an unusual pathway, termed non-hydrolytic serinolysis, in which the side chain hydroxyl group of the serine supplies its oxygen atom to form the C-terminus of the beta chain, while the remainder of the serine residue undergoes an oxidative deamination to produce ammonia and the pyruvoyl group blocking the N-terminus of the alpha chain.

The catalysed reaction is S-adenosyl-L-methionine + H(+) = S-adenosyl 3-(methylsulfanyl)propylamine + CO2. It participates in amine and polyamine biosynthesis; S-adenosylmethioninamine biosynthesis; S-adenosylmethioninamine from S-adenosyl-L-methionine: step 1/1. This Ipomoea batatas (Sweet potato) protein is S-adenosylmethionine decarboxylase proenzyme (SAMDC).